Reading from the N-terminus, the 81-residue chain is MSELFSTPDHTLDALGLRCPEPVMMVRKTVRTMPVGETLLIIADDPATTRDIPGFCRFMEHELVAQETEALPYRYLIRKSH.

Cys19 functions as the Cysteine persulfide intermediate in the catalytic mechanism.

It belongs to the sulfur carrier protein TusA family. Interacts with IscS.

It is found in the cytoplasm. It participates in tRNA modification. In terms of biological role, sulfur carrier protein involved in sulfur trafficking in the cell. Part of a sulfur-relay system required for 2-thiolation during synthesis of 2-thiouridine of the modified wobble base 5-methylaminomethyl-2-thiouridine (mnm(5)s(2)U) in tRNA. Interacts with IscS and stimulates its cysteine desulfurase activity. Accepts an activated sulfur from IscS, which is then transferred to TusD, and thus determines the direction of sulfur flow from IscS to 2-thiouridine formation. Also appears to be involved in sulfur transfer for the biosynthesis of molybdopterin. The chain is Sulfur carrier protein TusA from Klebsiella pneumoniae subsp. pneumoniae (strain ATCC 700721 / MGH 78578).